The following is a 193-amino-acid chain: Interleukin-18-binding protein (193 aa).

The N-terminal stretch at 1–28 is a signal peptide; it reads MTMRHCWTAGPSSWWVLLLYVHVILARA. One can recognise an Ig-like C2-type domain in the interval 60–161; it reads PALDVIWPEK…QVAQYHIILA (102 aa). 4 N-linked (GlcNAc...) asparagine glycosylation sites follow: Asn-74, Asn-98, Asn-120, and Asn-142. Cys-81 and Cys-145 are joined by a disulfide. A compositionally biased stretch (polar residues) spans 172-185; the sequence is SPSQETLSSHSPVS. The disordered stretch occupies residues 172–193; that stretch reads SPSQETLSSHSPVSRSAGPGVA.

It is found in the secreted. Binds to IL-18 and inhibits its activity. Functions as an inhibitor of the early TH1 cytokine response. In Mus musculus (Mouse), this protein is Interleukin-18-binding protein (Il18bp).